A 250-amino-acid chain; its full sequence is Electron transport regulator A (250 aa).

The HTH crp-type domain occupies 164–237; it reads KNAEERLAAF…GKYIIIVDHH (74 aa). The segment at residues 197–216 is a DNA-binding region (H-T-H motif); that stretch reads RGDIGNYLGLTVETISRLLG.

In terms of assembly, monomer.

Regulates anaerobic growth on fumarate, nitrite, Fe(3+), TMAO, DMSO, thiosulfate and sulfite, but not on nitrate nor Mn(4+). The protein is Electron transport regulator A (etrA) of Shewanella oneidensis (strain ATCC 700550 / JCM 31522 / CIP 106686 / LMG 19005 / NCIMB 14063 / MR-1).